Here is a 1042-residue protein sequence, read N- to C-terminus: MPGIVVFRRRWSVGSDDLVLPAIFLFLLHTTWFVILSVVLFGLVYNPHEACSLNLVDHGRGYLGILLSCMIAEMAIIWLSMRGGILYTEPRDSMQYVLYVRLAILVIEFIYAIVGIVWLTQYYTSCNDLTAKNVTLGMVVCNWVVILSVCITVLCVFDPTGRTFVKLRATKRRQRNLRTYNLRHRLEEGQATSWSRRLKVFLCCTRTKDSQSDAYSEIAYLFAEFFRDLDIVPSDIIAGLVLLRQRQRAKRNAVLDEANNDILAFLSGMPVTRNTKYLDLKNSQEMLRYKEVCYYMLFALAAYGWPMYLMRKPACGLCQLARSCSCCLCPARPRFAPGVTIEEDNCCGCNAIAIRRHFLDENMTAVDIVYTSCHDAVYETPFYVAVDHDKKKVVISIRGTLSPKDALTDLTGDAERLPVEGHHGTWLGHKGMVLSAEYIKKKLEQEMVLSQAFGRDLGRGTKHYGLIVVGHSLGAGTAAILSFLLRPQYPTLKCFAYSPPGGLLSEDAMEYSKEFVTAVVLGKDLVPRIGLSQLEGFRRQLLDVLQRSTKPKWRIIVGATKCIPKSELPEEVEVTTLASTRLWTHPSDLTIALSASTPLYPPGRIIHVVHNHPAEQCCCCEQEEPTYFAIWGDNKAFNEVIISPAMLHEHLPYVVMEGLNKVLENYNKGKTALLSAAKVMVSPTEVDLTPELIFQQQPLPTGPPMPTGLALELPTADHRNSSVRSKSQSEMSLEGFSEGRLLSPVVAAAARQDPVELLLLSTQERLAAELQARRAPLATMESLSDTESLYSFDSRRSSGFRSIRGSPSLHAVLERDEGHLFYIDPAIPEENPSLSSRTELLAADSLSKHSQDTQPLEAALGSGGVTPERPPSAAANDEEEEVGGGGGGPASRGELALHNGRLGDSPSPQVLEFAEFIDSLFNLDSKSSSFQDLYCMVVPESPTSDYAEGPKSPSQQEILLRAQFEPNLVPKPPRLFAGSADPSSGISLSPSFPLSSSGELMDLTPTGLSSQECLAADKIRTSTPTGHGASPAKQDELVISAR.

At methionine 1–alanine 22 the chain is on the cytoplasmic side. The chain crosses the membrane as a helical span at residues isoleucine 23–leucine 43. Topologically, residues valine 44 to arginine 60 are extracellular. A helical membrane pass occupies residues glycine 61–methionine 81. Over arginine 82–arginine 101 the chain is Cytoplasmic. Residues leucine 102–tyrosine 122 traverse the membrane as a helical segment. Over tyrosine 123–leucine 136 the chain is Extracellular. Asparagine 133 is a glycosylation site (N-linked (GlcNAc...) asparagine). The helical transmembrane segment at glycine 137–phenylalanine 157 threads the bilayer. Residues aspartate 158–arginine 1042 are Cytoplasmic-facing. Active-site charge relay system residues include serine 472 and aspartate 524. A phosphoserine mark is found at serine 727, serine 729, serine 732, serine 743, serine 782, serine 784, serine 806, serine 808, serine 833, serine 847, and serine 952. Positions leucine 846–glycine 903 are disordered. Residues leucine 1014 to arginine 1042 form a disordered region. Position 1023 is a phosphothreonine (threonine 1023).

It belongs to the AB hydrolase superfamily. Lipase family. As to quaternary structure, interacts (via C-terminal) with CAMK2A; leading to the phosphorylation and inhibition of DAGLA enzymatic activity. Interacts (via PPXXF motif) with HOMER1 and HOMER2; this interaction is required for DAGLA membrane localization. Ca(2+) is required as a cofactor. Phosphorylated at Ser-782 and Ser-808 by CAMK2A; phosphorylation by CAMK2A inhibits diacylglycerol lipase activity. Highly expressed in brain and pancreas.

It localises to the cell membrane. The protein localises to the postsynaptic density membrane. The protein resides in the early endosome membrane. Its subcellular location is the cell projection. It is found in the dendritic spine membrane. It carries out the reaction a 1,2-diacyl-sn-glycerol + H2O = a 2-acylglycerol + a fatty acid + H(+). It catalyses the reaction 1-octadecanoyl-2-(5Z,8Z,11Z,14Z-eicosatetraenoyl)-sn-glycerol + H2O = 2-(5Z,8Z,11Z,14Z-eicosatetraenoyl)-glycerol + octadecanoate + H(+). The catalysed reaction is 1,2-di-(9Z-octadecenoyl)-sn-glycerol + H2O = 2-(9Z-octadecenoyl)-glycerol + (9Z)-octadecenoate + H(+). The enzyme catalyses 1-(9Z-octadecenoyl)-2-(5Z,8Z,11Z,14Z-eicosatetraenoyl)-sn-glycerol + H2O = 2-(5Z,8Z,11Z,14Z-eicosatetraenoyl)-glycerol + (9Z)-octadecenoate + H(+). It carries out the reaction 1-(9Z-octadecenoyl)-2-octadecanoyl-sn-glycerol + H2O = 2-octadecanoylglycerol + (9Z)-octadecenoate + H(+). It catalyses the reaction 1-(9Z-octadecenoyl)-2-(9Z,12Z-octadecadienoyl)-sn-glycerol + H2O = 2-(9Z,12Z-octadecadienoyl)-glycerol + (9Z)-octadecenoate + H(+). The catalysed reaction is 1-(9Z-octadecenoyl)-2-O-(5Z,8Z,11Z,14Z-eicosatetraenyl)-sn-glycerol + H2O = 2-O-(5Z,8Z,11Z,14Z)-eicosatetraenylglycerol + (9Z)-octadecenoate + H(+). Its activity is regulated as follows. Inhibited by 1,2,3-triazole urea covalent inhibitors KT172, DH376 and DO34. Inhibited by p-hydroxy-mercuri-benzoate and HgCl(2), but not to PMSF. Also inhibited by RHC80267. Diacylglycerol lipase activity is inhibited by the phosphorylation of Ser-782 and Ser-808 by CAMK2A. Its function is as follows. Serine hydrolase that hydrolyzes arachidonic acid-esterified diacylglycerols (DAGs) to produce the principal endocannabinoid, 2-arachidonoylglycerol (2-AG). Preferentially hydrolyzes sn-1 fatty acids from diacylglycerols (DAG) that contain arachidonic acid (AA) esterified at the sn-2 position to biosynthesize 2-AG. Has negligible activity against other lipids including monoacylglycerols and phospholipids. Plays a key role in regulating 2-AG signaling in the central nervous system (CNS). Regulates 2-AG involved in retrograde suppression at central synapses. Supports axonal growth during development and adult neurogenesis. Plays a role for eCB signaling in the physiological regulation of anxiety and depressive behaviors. Also regulates neuroinflammatory responses in the brain, in particular, LPS-induced microglial activation. This is Diacylglycerol lipase-alpha (DAGLA) from Homo sapiens (Human).